We begin with the raw amino-acid sequence, 502 residues long: UDP-N-acetylmuramoylalanine--D-glutamate ligase (502 aa).

Residue Gly-129–Thr-135 coordinates ATP.

Belongs to the MurCDEF family.

Its subcellular location is the cytoplasm. It catalyses the reaction UDP-N-acetyl-alpha-D-muramoyl-L-alanine + D-glutamate + ATP = UDP-N-acetyl-alpha-D-muramoyl-L-alanyl-D-glutamate + ADP + phosphate + H(+). It functions in the pathway cell wall biogenesis; peptidoglycan biosynthesis. Its function is as follows. Cell wall formation. Catalyzes the addition of glutamate to the nucleotide precursor UDP-N-acetylmuramoyl-L-alanine (UMA). In Burkholderia ambifaria (strain MC40-6), this protein is UDP-N-acetylmuramoylalanine--D-glutamate ligase.